The sequence spans 316 residues: Pantothenate kinase (316 aa).

Residue 95–102 (GSVAVGKS) participates in ATP binding.

The protein belongs to the prokaryotic pantothenate kinase family.

Its subcellular location is the cytoplasm. It catalyses the reaction (R)-pantothenate + ATP = (R)-4'-phosphopantothenate + ADP + H(+). Its pathway is cofactor biosynthesis; coenzyme A biosynthesis; CoA from (R)-pantothenate: step 1/5. This Shewanella oneidensis (strain ATCC 700550 / JCM 31522 / CIP 106686 / LMG 19005 / NCIMB 14063 / MR-1) protein is Pantothenate kinase.